Reading from the N-terminus, the 143-residue chain is uncharacterized protein (143 aa).

This is an uncharacterized protein from Mycobacterium tuberculosis (strain CDC 1551 / Oshkosh).